The chain runs to 310 residues: tRNA pseudouridine synthase B (310 aa).

The active-site Nucleophile is Asp37.

It belongs to the pseudouridine synthase TruB family. Type 1 subfamily.

The catalysed reaction is uridine(55) in tRNA = pseudouridine(55) in tRNA. Functionally, responsible for synthesis of pseudouridine from uracil-55 in the psi GC loop of transfer RNAs. This is tRNA pseudouridine synthase B from Deinococcus deserti (strain DSM 17065 / CIP 109153 / LMG 22923 / VCD115).